Consider the following 468-residue polypeptide: Adenylyltransferase and sulfurtransferase MOCS3-1 (468 aa).

ATP contacts are provided by residues Gly111, Asp132, 139–143 (NNLHR), Lys156, and 200–201 (DN). Residues Cys241 and Cys244 each contribute to the Zn(2+) site. The active-site Glycyl thioester intermediate; for adenylyltransferase activity is the Cys258. The Zn(2+) site is built by Cys316 and Cys319. The Rhodanese domain maps to 371 to 466 (DGEPHLLLDV…WGRDVDPDFP (96 aa)). Residue Cys426 is the Cysteine persulfide intermediate; for sulfurtransferase activity of the active site.

The protein in the N-terminal section; belongs to the HesA/MoeB/ThiF family. UBA4 subfamily. Requires Zn(2+) as cofactor.

It localises to the cytoplasm. The catalysed reaction is [molybdopterin-synthase sulfur-carrier protein]-C-terminal Gly-Gly + ATP + H(+) = [molybdopterin-synthase sulfur-carrier protein]-C-terminal Gly-Gly-AMP + diphosphate. It catalyses the reaction [molybdopterin-synthase sulfur-carrier protein]-C-terminal Gly-Gly-AMP + S-sulfanyl-L-cysteinyl-[cysteine desulfurase] + AH2 = [molybdopterin-synthase sulfur-carrier protein]-C-terminal-Gly-aminoethanethioate + L-cysteinyl-[cysteine desulfurase] + A + AMP + 2 H(+). The protein operates within tRNA modification; 5-methoxycarbonylmethyl-2-thiouridine-tRNA biosynthesis. It participates in cofactor biosynthesis; molybdopterin biosynthesis. In terms of biological role, plays a central role in 2-thiolation of mcm(5)S(2)U at tRNA wobble positions of cytosolic tRNA(Lys), tRNA(Glu) and tRNA(Gln). Also essential during biosynthesis of the molybdenum cofactor. Acts by mediating the C-terminal thiocarboxylation of sulfur carriers URM1 and MOCS2A. Its N-terminus first activates URM1 and MOCS2A as acyl-adenylates (-COAMP), then the persulfide sulfur on the catalytic cysteine is transferred to URM1 and MOCS2A to form thiocarboxylation (-COSH) of their C-terminus. The reaction probably involves hydrogen sulfide that is generated from the persulfide intermediate and that acts as a nucleophile towards URM1 and MOCS2A. Subsequently, a transient disulfide bond is formed. Does not use thiosulfate as sulfur donor; NFS1 probably acting as a sulfur donor for thiocarboxylation reactions. This is Adenylyltransferase and sulfurtransferase MOCS3-1 from Zea mays (Maize).